The following is a 429-amino-acid chain: Enolase (429 aa).

(2R)-2-phosphoglycerate is bound at residue Q163. The active-site Proton donor is E205. 3 residues coordinate Mg(2+): D242, E287, and D314. The (2R)-2-phosphoglycerate site is built by K339, R368, S369, and K390. K339 acts as the Proton acceptor in catalysis.

Belongs to the enolase family. It depends on Mg(2+) as a cofactor.

The protein resides in the cytoplasm. It is found in the secreted. It localises to the cell surface. The catalysed reaction is (2R)-2-phosphoglycerate = phosphoenolpyruvate + H2O. Its pathway is carbohydrate degradation; glycolysis; pyruvate from D-glyceraldehyde 3-phosphate: step 4/5. Catalyzes the reversible conversion of 2-phosphoglycerate (2-PG) into phosphoenolpyruvate (PEP). It is essential for the degradation of carbohydrates via glycolysis. The sequence is that of Enolase from Magnetococcus marinus (strain ATCC BAA-1437 / JCM 17883 / MC-1).